We begin with the raw amino-acid sequence, 267 residues long: Phosphatidylserine decarboxylase proenzyme (267 aa).

Residues Asp-78, His-132, and Ser-236 each act as charge relay system; for autoendoproteolytic cleavage activity in the active site. The Schiff-base intermediate with substrate; via pyruvic acid; for decarboxylase activity role is filled by Ser-236. Residue Ser-236 is modified to Pyruvic acid (Ser); by autocatalysis.

It belongs to the phosphatidylserine decarboxylase family. PSD-B subfamily. Prokaryotic type I sub-subfamily. In terms of assembly, heterodimer of a large membrane-associated beta subunit and a small pyruvoyl-containing alpha subunit. The cofactor is pyruvate. In terms of processing, is synthesized initially as an inactive proenzyme. Formation of the active enzyme involves a self-maturation process in which the active site pyruvoyl group is generated from an internal serine residue via an autocatalytic post-translational modification. Two non-identical subunits are generated from the proenzyme in this reaction, and the pyruvate is formed at the N-terminus of the alpha chain, which is derived from the carboxyl end of the proenzyme. The autoendoproteolytic cleavage occurs by a canonical serine protease mechanism, in which the side chain hydroxyl group of the serine supplies its oxygen atom to form the C-terminus of the beta chain, while the remainder of the serine residue undergoes an oxidative deamination to produce ammonia and the pyruvoyl prosthetic group on the alpha chain. During this reaction, the Ser that is part of the protease active site of the proenzyme becomes the pyruvoyl prosthetic group, which constitutes an essential element of the active site of the mature decarboxylase.

It localises to the cell membrane. It carries out the reaction a 1,2-diacyl-sn-glycero-3-phospho-L-serine + H(+) = a 1,2-diacyl-sn-glycero-3-phosphoethanolamine + CO2. The protein operates within phospholipid metabolism; phosphatidylethanolamine biosynthesis; phosphatidylethanolamine from CDP-diacylglycerol: step 2/2. Functionally, catalyzes the formation of phosphatidylethanolamine (PtdEtn) from phosphatidylserine (PtdSer). The polypeptide is Phosphatidylserine decarboxylase proenzyme (Helicobacter pylori (strain J99 / ATCC 700824) (Campylobacter pylori J99)).